Consider the following 510-residue polypeptide: MIWHVQNENFILDSTRIFMKAFHLLLFHGSFIFPECILIFGLILLLMIDSTSDQKDRPWFYFISSTSLVMSITALFFRWREEPIISFSGNFQTNNFNEIFQFLILLCSTLCIPLSVEYIECTEMAITEFLLFVLTATLGGMFLCGANDLITIFVAPECFSLCSYLLSGYTKRDVRSNEATTKYLLMGGASSSILVHGLSWLYGLSGGEIELQEIVNGLINTQMYNSPGISIALISITVGIGFKLSPAPFHQWTPDVYEGSPTPVVAFLSVTSKVAASASATRIFDIPFYFSSTEWHLLLEILAILSMILGNLIALTQTSMKRMLAYSSIGQIGYVIIGIIVGDSNDGYASMITYMLFYISMNLGTFACIVSFGLRTGTDNIRDYAGLYTKDPFLALSSALCLLSLGGLPPLAGFFGKLYLFWCGWQAGLYFLVSIGLLTSVVSIYYYLKIIKLLMTGRNQEITPHVRNYRRSPLRSNNSIELSMTVCVIASTIPGISMNPILAIAQDTLF.

12 helical membrane passes run 24–44, 59–79, 99–119, 124–144, 149–169, 184–204, 229–249, 295–315, 323–343, 354–374, 395–415, and 418–438; these read LLLF…GLIL, WFYF…FFRW, IFQF…VEYI, MAIT…MFLC, LITI…LSGY, LLMG…LYGL, ISIA…PAPF, WHLL…LIAL, MLAY…IVGD, YMLF…SFGL, ALSS…AGFF, and LYLF…IGLL.

The protein belongs to the complex I subunit 2 family. NDH is composed of at least 16 different subunits, 5 of which are encoded in the nucleus.

It localises to the plastid. The protein localises to the chloroplast thylakoid membrane. It carries out the reaction a plastoquinone + NADH + (n+1) H(+)(in) = a plastoquinol + NAD(+) + n H(+)(out). The enzyme catalyses a plastoquinone + NADPH + (n+1) H(+)(in) = a plastoquinol + NADP(+) + n H(+)(out). NDH shuttles electrons from NAD(P)H:plastoquinone, via FMN and iron-sulfur (Fe-S) centers, to quinones in the photosynthetic chain and possibly in a chloroplast respiratory chain. The immediate electron acceptor for the enzyme in this species is believed to be plastoquinone. Couples the redox reaction to proton translocation, and thus conserves the redox energy in a proton gradient. The chain is NAD(P)H-quinone oxidoreductase subunit 2, chloroplastic from Coelogyne cristata (Orchid).